The primary structure comprises 473 residues: Mitochondrial distribution and morphology protein 10 (473 aa).

Belongs to the MDM10 family. Component of the ER-mitochondria encounter structure (ERMES) or MDM complex, composed of MMM1, MDM10, MDM12 and MDM34. Associates with the mitochondrial outer membrane sorting assembly machinery SAM(core) complex.

It is found in the mitochondrion outer membrane. Functionally, component of the ERMES/MDM complex, which serves as a molecular tether to connect the endoplasmic reticulum and mitochondria. Components of this complex are involved in the control of mitochondrial shape and protein biogenesis and may function in phospholipid exchange. MDM10 is involved in the late assembly steps of the general translocase of the mitochondrial outer membrane (TOM complex). Functions in the TOM40-specific route of the assembly of outer membrane beta-barrel proteins, including the association of TOM40 with the receptor TOM22 and small TOM proteins. Can associate with the SAM(core) complex as well as the MDM12-MMM1 complex, both involved in late steps of the major beta-barrel assembly pathway, that is responsible for biogenesis of all outer membrane beta-barrel proteins. May act as a switch that shuttles between both complexes and channels precursor proteins into the TOM40-specific pathway. Plays a role in mitochondrial morphology and in the inheritance of mitochondria. The sequence is that of Mitochondrial distribution and morphology protein 10 from Candida albicans (strain SC5314 / ATCC MYA-2876) (Yeast).